A 268-amino-acid polypeptide reads, in one-letter code: Glutamate 5-kinase (268 aa).

An ATP-binding site is contributed by Lys15. 3 residues coordinate substrate: Ser55, Asp142, and Asn158. 178–179 (SD) lines the ATP pocket.

Belongs to the glutamate 5-kinase family.

The protein localises to the cytoplasm. It carries out the reaction L-glutamate + ATP = L-glutamyl 5-phosphate + ADP. It participates in amino-acid biosynthesis; L-proline biosynthesis; L-glutamate 5-semialdehyde from L-glutamate: step 1/2. Its function is as follows. Catalyzes the transfer of a phosphate group to glutamate to form L-glutamate 5-phosphate. This Oenococcus oeni (strain ATCC BAA-331 / PSU-1) protein is Glutamate 5-kinase.